Reading from the N-terminus, the 334-residue chain is Fructose-1,6-bisphosphatase class 1 (334 aa).

The Mg(2+) site is built by glutamate 93, aspartate 117, leucine 119, and aspartate 120. Residues 120-123 (DGSS), asparagine 213, tyrosine 244, and lysine 274 each bind substrate. Glutamate 280 serves as a coordination point for Mg(2+).

This sequence belongs to the FBPase class 1 family. As to quaternary structure, homotetramer. Mg(2+) is required as a cofactor.

It localises to the cytoplasm. The enzyme catalyses beta-D-fructose 1,6-bisphosphate + H2O = beta-D-fructose 6-phosphate + phosphate. The protein operates within carbohydrate biosynthesis; gluconeogenesis. The chain is Fructose-1,6-bisphosphatase class 1 from Flavobacterium johnsoniae (strain ATCC 17061 / DSM 2064 / JCM 8514 / BCRC 14874 / CCUG 350202 / NBRC 14942 / NCIMB 11054 / UW101) (Cytophaga johnsonae).